The following is a 776-amino-acid chain: Probable exo-1,4-beta-xylosidase bxlB (776 aa).

Positions 1–23 (MVHLSPLLRPLAAFSFFTSLAST) are cleaved as a signal peptide. Asn65 and Asn105 each carry an N-linked (GlcNAc...) asparagine glycan. Residue Asp291 is part of the active site. N-linked (GlcNAc...) asparagine glycans are attached at residues Asn343, Asn410, Asn421, Asn462, Asn623, and Asn766.

The protein belongs to the glycosyl hydrolase 3 family.

It localises to the secreted. It carries out the reaction Hydrolysis of (1-&gt;4)-beta-D-xylans, to remove successive D-xylose residues from the non-reducing termini.. It functions in the pathway glycan degradation; xylan degradation. Xylan 1,4-beta-xylosidase involved in the hydrolysis of xylan, a major structural heterogeneous polysaccharide found in plant biomass representing the second most abundant polysaccharide in the biosphere, after cellulose. The sequence is that of Probable exo-1,4-beta-xylosidase bxlB (bxlB) from Aspergillus flavus (strain ATCC 200026 / FGSC A1120 / IAM 13836 / NRRL 3357 / JCM 12722 / SRRC 167).